A 226-amino-acid chain; its full sequence is tRNA (guanine-N(1)-)-methyltransferase (226 aa).

Residues glycine 112 and 132–137 each bind S-adenosyl-L-methionine; that span reads IGDYVL.

This sequence belongs to the RNA methyltransferase TrmD family. In terms of assembly, homodimer.

Its subcellular location is the cytoplasm. It catalyses the reaction guanosine(37) in tRNA + S-adenosyl-L-methionine = N(1)-methylguanosine(37) in tRNA + S-adenosyl-L-homocysteine + H(+). Specifically methylates guanosine-37 in various tRNAs. The polypeptide is tRNA (guanine-N(1)-)-methyltransferase (Flavobacterium johnsoniae (strain ATCC 17061 / DSM 2064 / JCM 8514 / BCRC 14874 / CCUG 350202 / NBRC 14942 / NCIMB 11054 / UW101) (Cytophaga johnsonae)).